The chain runs to 468 residues: Ribulose bisphosphate carboxylase large chain (468 aa).

Lys5 carries the N6,N6,N6-trimethyllysine modification. Residues Asn114 and Thr164 each coordinate substrate. Lys166 serves as the catalytic Proton acceptor. Lys168 serves as a coordination point for substrate. Mg(2+) is bound by residues Lys192, Asp194, and Glu195. Lys192 is subject to N6-carboxylysine. The Proton acceptor role is filled by His285. Substrate-binding residues include Arg286, His318, and Ser370.

The protein belongs to the RuBisCO large chain family. Type I subfamily. As to quaternary structure, heterohexadecamer of 8 large chains and 8 small chains; disulfide-linked. The disulfide link is formed within the large subunit homodimers. The cofactor is Mg(2+). Post-translationally, the disulfide bond which can form in the large chain dimeric partners within the hexadecamer appears to be associated with oxidative stress and protein turnover.

Its subcellular location is the plastid. The protein localises to the chloroplast. The catalysed reaction is 2 (2R)-3-phosphoglycerate + 2 H(+) = D-ribulose 1,5-bisphosphate + CO2 + H2O. The enzyme catalyses D-ribulose 1,5-bisphosphate + O2 = 2-phosphoglycolate + (2R)-3-phosphoglycerate + 2 H(+). RuBisCO catalyzes two reactions: the carboxylation of D-ribulose 1,5-bisphosphate, the primary event in carbon dioxide fixation, as well as the oxidative fragmentation of the pentose substrate in the photorespiration process. Both reactions occur simultaneously and in competition at the same active site. The chain is Ribulose bisphosphate carboxylase large chain from Datura stramonium (Jimsonweed).